The chain runs to 763 residues: Phosphoglycerol transferase I (763 aa).

Helical transmembrane passes span 1-21, 26-46, 77-97, and 108-128; these read MSELLSVALFLASVLIYAWKA, WWFAATLTVLGLFVILNITLY, ILPGIGIALALVAVFGALGWV, and VGYSLLALLLALGSVDASPAF.

This sequence belongs to the OpgB family.

It localises to the cell inner membrane. The catalysed reaction is a phosphatidylglycerol + a membrane-derived-oligosaccharide D-glucose = a 1,2-diacyl-sn-glycerol + a membrane-derived-oligosaccharide 6-(glycerophospho)-D-glucose.. Its pathway is glycan metabolism; osmoregulated periplasmic glucan (OPG) biosynthesis. In terms of biological role, transfers a phosphoglycerol residue from phosphatidylglycerol to the membrane-bound nascent glucan backbones. The protein is Phosphoglycerol transferase I of Salmonella dublin (strain CT_02021853).